The chain runs to 365 residues: Annexin B22 (365 aa).

Annexin repeat units follow at residues 34-105 (FSAS…QLIV), 106-185 (DTPY…SLVQ), 211-283 (ELAE…AVLR), and 287-358 (DRPS…VLMG). The Ca(2+) site is built by Met47, Gly49, Gly51, Thr52, Glu54, Asp91, Met119, Gly121, Gly123, Asp126, Lys169, Glu171, Thr172, Glu177, Asp273, Met300, Gly302, Leu303, Gly304, and Asp344.

Belongs to the annexin family. As to quaternary structure, homodimer.

Its subcellular location is the tegument. The protein localises to the secreted. It localises to the extracellular exosome. The protein resides in the host cell. Functionally, involved in reproduction of the worm. Involved in host-parasite interaction. Delivered into the host cell by means of parasite exosomes. Binds to acidic phospholipid membranes in a calcium-dependent manner in vitro. Causes aggregation of liposomes in the presence of calcium, but not in its absence. Likely to promote membrane fusion. May provide structural integrity within the tegument. The sequence is that of Annexin B22 from Schistosoma mansoni (Blood fluke).